The primary structure comprises 746 residues: MEHTYQYSWIIPFIPLPVPILLGVGLLLFPTATKNLRRMWTFLSIFLLSIVMIFSIYLSIQQIFLSCIHQNVWSWTINNEFSFEFGYFIDPLTSIMSILITTVGILVLIYSDNYMSHDQGYLRFFAYMGFFNTSMLGLVTSSNLIQVYFFWELVGMCSYLLIGFWFTRPIAANACQKAFVTNRVGDFGLLLGILGLYWITGSFEFQDLFEIFNNLILNNRVNLLFLTLCAFLLFVGPIAKSAQFPLHVWLPDAMEGPTPISALIHAATMVAAGIFLVARLLPLFIVIPSIMYIISLIGIITVLLGATLALAQKDIKRGLAYSTMSQLGYMMLALGMGSYRSALFHLITHAYSKALLFLGSGSIIHSMEAIVGYSPDKSQNMILMGGLTKHVPITKTAFLIGTLSLCGIPPLACFWSKDEILNDSLLFSPIFAIIACSTAGLTAFYMFRIYLLTFEGHLNTYFLNYSGKKSGSFYSLSLWGKEEEKKLNKNFGLVPLLTMNNTKRASFFCNKTYKISNNVRNQIFITVENFGLNTRTFYYPHESDNTILFPMLILVLFTLFIGAIGIPFNQEGIDFDILSKFFTPSINLLHKNSQNFVDWYEFLRNATFSVSIAFFGIFIAYCLYKPFYSSLLNLTLLNSFQKWNSKRIHWEKLINFVYNWSYNRGYIDSFFKTSLIESIRRLAKQTTFFDKRIIDGITNGVGITSFFVGEVTKYIGGSRISSYLFLYLSYVLIFLMILFFFYFEKF.

The next 16 membrane-spanning stretches (helical) occupy residues Trp-9–Phe-29, Trp-40–Ile-60, Ile-89–Ile-109, Phe-125–Ile-145, Val-147–Thr-167, Gly-185–Phe-205, Val-221–Ser-241, Thr-258–Ala-278, Leu-280–Ile-300, Leu-327–Ile-347, Ala-354–Ser-374, Thr-396–Ser-416, Leu-425–Tyr-445, Ile-547–Pro-567, Phe-608–Tyr-628, and Tyr-723–Phe-743.

It belongs to the complex I subunit 5 family. In terms of assembly, NDH is composed of at least 16 different subunits, 5 of which are encoded in the nucleus.

Its subcellular location is the plastid. It is found in the chloroplast thylakoid membrane. It carries out the reaction a plastoquinone + NADH + (n+1) H(+)(in) = a plastoquinol + NAD(+) + n H(+)(out). The enzyme catalyses a plastoquinone + NADPH + (n+1) H(+)(in) = a plastoquinol + NADP(+) + n H(+)(out). In terms of biological role, NDH shuttles electrons from NAD(P)H:plastoquinone, via FMN and iron-sulfur (Fe-S) centers, to quinones in the photosynthetic chain and possibly in a chloroplast respiratory chain. The immediate electron acceptor for the enzyme in this species is believed to be plastoquinone. Couples the redox reaction to proton translocation, and thus conserves the redox energy in a proton gradient. The chain is NAD(P)H-quinone oxidoreductase subunit 5, chloroplastic (ndhF) from Arabidopsis thaliana (Mouse-ear cress).